We begin with the raw amino-acid sequence, 754 residues long: Putative sulfate transporter YPR003C (754 aa).

A disordered region spans residues Met1–Ser91. Over Met1–Lys118 the chain is Cytoplasmic. A compositionally biased stretch (basic and acidic residues) spans Arg25 to Asn45. A compositionally biased stretch (low complexity) spans Asn65–Asn89. The helical transmembrane segment at Leu119–Ser139 threads the bilayer. Residues Tyr140–His146 lie on the Lumenal side of the membrane. The chain crosses the membrane as a helical span at residues Val147–Gly167. At Ser168–Met172 the chain is on the cytoplasmic side. Residues Ile173 to Leu193 form a helical membrane-spanning segment. The Lumenal portion of the chain corresponds to His194–Ser199. The helical transmembrane segment at Leu200–Ile220 threads the bilayer. Over Ser221–Lys232 the chain is Cytoplasmic. The chain crosses the membrane as a helical span at residues Ala233 to Ser253. Residues Glu254–Ala282 are Lumenal-facing. A helical membrane pass occupies residues Pro283–Leu303. Topologically, residues Thr304–Ser317 are cytoplasmic. A helical transmembrane segment spans residues Ala318–Phe338. Residues Asn339–Lys370 lie on the Lumenal side of the membrane. A helical membrane pass occupies residues Leu371–Thr391. At Thr392–Glu410 the chain is on the cytoplasmic side. The chain crosses the membrane as a helical span at residues Leu411 to Gly431. Topologically, residues Gly432–Gly450 are lumenal. Residues Val451 to Ile471 traverse the membrane as a helical segment. At Pro472–Cys474 the chain is on the cytoplasmic side. The helical transmembrane segment at Val475–Ile495 threads the bilayer. Residues Lys496–Thr517 are Lumenal-facing. The helical transmembrane segment at Ile518 to Ile538 threads the bilayer. Residues Lys539 to Val754 lie on the Cytoplasmic side of the membrane. One can recognise an STAS domain in the interval Asp574–Ile725.

It belongs to the SLC26A/SulP transporter (TC 2.A.53) family.

It is found in the endoplasmic reticulum membrane. Its function is as follows. Possible sulfate transporter. The protein is Putative sulfate transporter YPR003C of Saccharomyces cerevisiae (strain ATCC 204508 / S288c) (Baker's yeast).